Here is a 510-residue protein sequence, read N- to C-terminus: Hydroperoxide bicyclase CYP5164A3, mitochondrial (510 aa).

The transit peptide at 1–31 (MQRVGAASPTCSSLQAPAAAPPILTISPHHR) directs the protein to the mitochondrion. Residue cysteine 452 participates in heme binding.

It belongs to the cytochrome P450 family. It depends on heme as a cofactor.

The protein resides in the mitochondrion. The enzyme catalyses (13S)-hydroperoxy-(9Z,11E,15Z)-octadecatrienoate = plasmodiophorol A. It carries out the reaction (13S)-hydroperoxy-(9Z,11E,15Z)-octadecatrienoate = plasmodiophorol B. It catalyses the reaction (13S)-hydroperoxy-(9Z,11E,15Z)-octadecatrienoate = ectocarpin A + H2O. The catalysed reaction is (15S)-hydroperoxy-(5Z,8Z,11Z,13E,17Z)-eicosapentaenoate = ectocarpin B + H2O. The enzyme catalyses (15S)-hydroperoxy-(5Z,8Z,11Z,13E,17Z)-eicosapentaenoate = ectocarpin C. It carries out the reaction (15S)-hydroperoxy-(5Z,8Z,11Z,13E,17Z)-eicosapentaenoate + H2O = ectocarpin D. It catalyses the reaction (15S)-hydroperoxy-(5Z,8Z,11Z,13E,17Z)-eicosapentaenoate = 14-oxo-15-hydroxy-(5Z,8Z,11Z,17Z)-eicosatetraenoate. The protein operates within lipid metabolism; oxylipin biosynthesis. Functionally, cytochrome P450 hydroperoxide bicyclase involved in the metabolism of oxylipins 'ectocarpins' natural products, such as hybridalactone, ecklonilactones and derivatives. Isomerizes the hydroperoxides into epoxyalcohols via epoxyallylic radical. Can use alpha-linolenic acid 13(S)-hydroperoxide (13-HPOTE) and eicosapentaenoic acid 15(S)-hydroperoxide (15-HPEPE) as preferred substrate to produce corresponding heterobicyclic oxylipins, such as plasmodiophorol A (6-oxabicyclo[3.1.0]hexane), plasmodiophorol B (2-oxabicyclo[2.2.1]heptane) and plasmodiophorol C (4-hydroxymethyl-1,2-dihydroxycyclopentane) as well as ectocarpin A (3-propenyl-6-oxabicyclo[3.1.0]hexane) formed at about 15:3:3:1 ratio for 13-HPOTE, and analogous to plasmodiophorols A and B including ectocarpin B (3-[(1'E)-propenyl]-6-oxabicyclo[3.1.0]hexane), ectocarpin C, 14-oxo-15-hydroxy-5,8,11,17-eicosate-traenoic acid and ectocarpin D for 15-HPEPE. Barely able to use linoleic acid 13-hydroperoxide (13-HPODE), linoleic acid 9-hydroperoxide (9-HPODE), eicosapentaenoic acid 15-hydroperoxide (15-HPEPE), and alpha-linolenic acid 9-hydroperoxide (9-HPOTE) as substrates. This Ectocarpus siliculosus (Brown alga) protein is Hydroperoxide bicyclase CYP5164A3, mitochondrial.